We begin with the raw amino-acid sequence, 102 residues long: Small ribosomal subunit protein uS10 (102 aa).

This sequence belongs to the universal ribosomal protein uS10 family. Part of the 30S ribosomal subunit.

Involved in the binding of tRNA to the ribosomes. In Planobispora rosea, this protein is Small ribosomal subunit protein uS10.